The following is a 703-amino-acid chain: Polyribonucleotide nucleotidyltransferase (703 aa).

Residues D488 and D494 each contribute to the Mg(2+) site. The 60-residue stretch at 555-614 (PKIVKMQINPDKIKDVIGPGGKIITKIIDETGVKIDIEQTGEVFISGIEIDMIKKAQELI) folds into the KH domain. The S1 motif domain maps to 624–692 (GKTYKGKVSR…EKGRVNLSRK (69 aa)).

The protein belongs to the polyribonucleotide nucleotidyltransferase family. It depends on Mg(2+) as a cofactor.

The protein resides in the cytoplasm. The enzyme catalyses RNA(n+1) + phosphate = RNA(n) + a ribonucleoside 5'-diphosphate. Functionally, involved in mRNA degradation. Catalyzes the phosphorolysis of single-stranded polyribonucleotides processively in the 3'- to 5'-direction. This is Polyribonucleotide nucleotidyltransferase from Clostridioides difficile (strain 630) (Peptoclostridium difficile).